The sequence spans 88 residues: Acyl-CoA-binding domain-containing protein 7 (88 aa).

One can recognise an ACB domain in the interval 3–88; the sequence is LQADFDRAAE…AKELIEKYGI (86 aa). An acyl-CoA is bound by residues R15, 30–34, K56, and Y75; that span reads YGLYK.

It belongs to the ACBD7 family.

Its function is as follows. Binds medium- and long-chain acyl-CoA esters. This chain is Acyl-CoA-binding domain-containing protein 7 (ACBD7), found in Homo sapiens (Human).